A 297-amino-acid chain; its full sequence is Protoheme IX farnesyltransferase 1 (297 aa).

9 helical membrane-spanning segments follow: residues 23-43 (VVVL…RAGV), 45-65 (WSVL…AAAV), 93-113 (LPAL…LLMF), 117-137 (LTAW…TGFL), 145-165 (IVIG…AVSG), 171-191 (PLLL…ALAI), 216-236 (LHIL…YAIH), 241-261 (LYLV…WVLY), and 277-297 (IGYL…LLNL).

It belongs to the UbiA prenyltransferase family. Protoheme IX farnesyltransferase subfamily.

Its subcellular location is the cell inner membrane. It catalyses the reaction heme b + (2E,6E)-farnesyl diphosphate + H2O = Fe(II)-heme o + diphosphate. The protein operates within porphyrin-containing compound metabolism; heme O biosynthesis; heme O from protoheme: step 1/1. Converts heme B (protoheme IX) to heme O by substitution of the vinyl group on carbon 2 of heme B porphyrin ring with a hydroxyethyl farnesyl side group. The chain is Protoheme IX farnesyltransferase 1 from Pseudomonas putida (strain W619).